Reading from the N-terminus, the 591-residue chain is L-fucose isomerase (591 aa).

Active-site proton acceptor residues include Glu-337 and Asp-361. Glu-337, Asp-361, and His-528 together coordinate Mn(2+).

Belongs to the L-fucose isomerase family. In terms of assembly, homohexamer. Mn(2+) serves as cofactor.

Its subcellular location is the cytoplasm. The enzyme catalyses L-fucose = L-fuculose. It participates in carbohydrate degradation; L-fucose degradation; L-lactaldehyde and glycerone phosphate from L-fucose: step 1/3. Converts the aldose L-fucose into the corresponding ketose L-fuculose. This Salmonella heidelberg (strain SL476) protein is L-fucose isomerase.